Reading from the N-terminus, the 415-residue chain is Protein-lysine N-trimethyltransferase SMYD5 (415 aa).

Residues 20–351 (NCVDVRFINN…PGEEICISYL (332 aa)) enclose the SET domain. An MYND-type zinc finger spans residues 95–135 (PHPELCKVRPDRHQACPQCQVMYCSSECRQAAMDQYHKILC). Tyr350 contacts S-adenosyl-L-methionine. The disordered stretch occupies residues 388–415 (DMTSEDEEEVEGEGETEGEDMEDEMTDV).

The protein belongs to the class V-like SAM-binding methyltransferase superfamily. Expressed at high levels in the ovary and at lower levels in the fin, testis and brain.

The protein localises to the cytoplasm. It catalyses the reaction L-lysyl-[protein] + 3 S-adenosyl-L-methionine = N(6),N(6),N(6)-trimethyl-L-lysyl-[protein] + 3 S-adenosyl-L-homocysteine + 3 H(+). It carries out the reaction L-lysyl(20)-[histone H4] + 3 S-adenosyl-L-methionine = N(6),N(6),N(6)-trimethyl-L-lysyl(20)-[histone H4] + 3 S-adenosyl-L-homocysteine + 3 H(+). The catalysed reaction is L-lysyl(36)-[histone H3] + 3 S-adenosyl-L-methionine = N(6),N(6),N(6)-trimethyl-L-lysyl(36)-[histone H3] + 3 S-adenosyl-L-homocysteine + 3 H(+). Functionally, protein-lysine N-trimethyltransferase that specifically catalyzes trimethylation of 'Lys-22' of the RPL40/eL40 subunit of the 60S ribosome, thereby promoting translation elongation and protein synthesis. May also act as a histone methyltransferase in the context of histone octamers, but not on nucleosome substrates: trimethylates 'Lys-36' of histone H3 and 'Lys-20' of histone H4 to form H3K36me3 and H4K20me3, respectively. The histone methyltransferase activity, which is independent of its SET domain, is however unsure in vivo. Plays a crucial role in hematopoiesis during embryogenesis by negatively regulating expression of genes related to both primitive and definitive hematopoiesis. The chain is Protein-lysine N-trimethyltransferase SMYD5 from Danio rerio (Zebrafish).